The primary structure comprises 456 residues: Bifunctional protein GlmU (456 aa).

The tract at residues 1 to 229 (MLNNTMSVVI…ISETDGVNNR (229 aa)) is pyrophosphorylase. UDP-N-acetyl-alpha-D-glucosamine is bound by residues 11–14 (LAAG), K25, Q76, 81–82 (GT), 103–105 (YGD), G140, E154, N169, and N227. Mg(2+) is bound at residue D105. Mg(2+) is bound at residue N227. Residues 230-250 (LQLSRLERIYQAEQAEKLLLA) form a linker region. Positions 251 to 456 (GVMLRDPARF…QGWQRPVKKK (206 aa)) are N-acetyltransferase. UDP-N-acetyl-alpha-D-glucosamine is bound by residues R333 and K351. H363 acts as the Proton acceptor in catalysis. Y366 and N377 together coordinate UDP-N-acetyl-alpha-D-glucosamine. Residues A380, 386 to 387 (NY), S405, A423, and R440 contribute to the acetyl-CoA site.

It in the N-terminal section; belongs to the N-acetylglucosamine-1-phosphate uridyltransferase family. This sequence in the C-terminal section; belongs to the transferase hexapeptide repeat family. In terms of assembly, homotrimer. The cofactor is Mg(2+).

Its subcellular location is the cytoplasm. It carries out the reaction alpha-D-glucosamine 1-phosphate + acetyl-CoA = N-acetyl-alpha-D-glucosamine 1-phosphate + CoA + H(+). The enzyme catalyses N-acetyl-alpha-D-glucosamine 1-phosphate + UTP + H(+) = UDP-N-acetyl-alpha-D-glucosamine + diphosphate. It functions in the pathway nucleotide-sugar biosynthesis; UDP-N-acetyl-alpha-D-glucosamine biosynthesis; N-acetyl-alpha-D-glucosamine 1-phosphate from alpha-D-glucosamine 6-phosphate (route II): step 2/2. Its pathway is nucleotide-sugar biosynthesis; UDP-N-acetyl-alpha-D-glucosamine biosynthesis; UDP-N-acetyl-alpha-D-glucosamine from N-acetyl-alpha-D-glucosamine 1-phosphate: step 1/1. It participates in bacterial outer membrane biogenesis; LPS lipid A biosynthesis. Functionally, catalyzes the last two sequential reactions in the de novo biosynthetic pathway for UDP-N-acetylglucosamine (UDP-GlcNAc). The C-terminal domain catalyzes the transfer of acetyl group from acetyl coenzyme A to glucosamine-1-phosphate (GlcN-1-P) to produce N-acetylglucosamine-1-phosphate (GlcNAc-1-P), which is converted into UDP-GlcNAc by the transfer of uridine 5-monophosphate (from uridine 5-triphosphate), a reaction catalyzed by the N-terminal domain. The sequence is that of Bifunctional protein GlmU from Enterobacter sp. (strain 638).